A 30-amino-acid chain; its full sequence is Cycloviolacin-O7 (30 aa).

The segment at residues 1–30 (SIPCGESCVWIPCTITALAGCKCKSKVCYN) is a cross-link (cyclopeptide (Ser-Asn)). 3 disulfide bridges follow: C4–C21, C8–C23, and C13–C28.

In terms of processing, this is a cyclic peptide.

Probably participates in a plant defense mechanism. This Viola odorata (Sweet violet) protein is Cycloviolacin-O7.